Here is a 270-residue protein sequence, read N- to C-terminus: Non-homologous end joining protein Ku (270 aa).

In terms of domain architecture, Ku spans 10-194; it reads SLGLLNIGIK…NYPIQKQELT (185 aa).

Belongs to the prokaryotic Ku family. Homodimer. Interacts with LigD.

Its function is as follows. With LigD forms a non-homologous end joining (NHEJ) DNA repair enzyme, which repairs dsDNA breaks with reduced fidelity. Binds linear dsDNA with 5'- and 3'- overhangs but not closed circular dsDNA nor ssDNA. Recruits and stimulates the ligase activity of LigD. This Bacillus thuringiensis subsp. konkukian (strain 97-27) protein is Non-homologous end joining protein Ku.